The sequence spans 155 residues: NADPH-dependent 7-cyano-7-deazaguanine reductase (155 aa).

Residues 1-20 show a composition bias toward polar residues; that stretch reads MMPNTDVSSLSMLGQQTETA. Positions 1–26 are disordered; it reads MMPNTDVSSLSMLGQQTETAKSPEEA. Cys-53 (thioimide intermediate) is an active-site residue. Residue Asp-60 is the Proton donor of the active site. Substrate-binding positions include 75–77 and 94–95; these read VES and HE.

It belongs to the GTP cyclohydrolase I family. QueF type 1 subfamily.

The protein resides in the cytoplasm. The catalysed reaction is 7-aminomethyl-7-carbaguanine + 2 NADP(+) = 7-cyano-7-deazaguanine + 2 NADPH + 3 H(+). Its pathway is tRNA modification; tRNA-queuosine biosynthesis. Its function is as follows. Catalyzes the NADPH-dependent reduction of 7-cyano-7-deazaguanine (preQ0) to 7-aminomethyl-7-deazaguanine (preQ1). This Rhizobium etli (strain CIAT 652) protein is NADPH-dependent 7-cyano-7-deazaguanine reductase.